Consider the following 471-residue polypeptide: UDP-N-acetylmuramate--L-alanine ligase (471 aa).

Residue 114-120 coordinates ATP; sequence GTHGKTT.

It belongs to the MurCDEF family.

It is found in the cytoplasm. The catalysed reaction is UDP-N-acetyl-alpha-D-muramate + L-alanine + ATP = UDP-N-acetyl-alpha-D-muramoyl-L-alanine + ADP + phosphate + H(+). The protein operates within cell wall biogenesis; peptidoglycan biosynthesis. Functionally, cell wall formation. The sequence is that of UDP-N-acetylmuramate--L-alanine ligase from Brucella abortus (strain S19).